Here is a 541-residue protein sequence, read N- to C-terminus: Interleukin-18 receptor 1 (541 aa).

A signal peptide spans 1–18 (MNCRELPLTLWVLISVST). Cystine bridges form between Cys-22/Cys-41 and Cys-43/Cys-81. Topologically, residues 22–329 (CTSRPHITVV…ADIPGHVFTR (308 aa)) are extracellular. 3 consecutive Ig-like C2-type domains span residues 33–121 (GEPF…SCFT), 133–212 (KKFF…DRSN), and 220–312 (PKLN…KSFI). Asn-91, Asn-102, Asn-150, Asn-197, Asn-203, Asn-236, Asn-255, and Asn-297 each carry an N-linked (GlcNAc...) asparagine glycan. 2 disulfides stabilise this stretch: Cys-119–Cys-158 and Cys-140–Cys-185. Cysteines 237 and 298 form a disulfide. The helical transmembrane segment at 330 to 350 (GMIIAVLILVAVVCLVTVCVI) threads the bilayer. Residues 351–541 (YRVDLVLFYR…PEVLPVLSES (191 aa)) lie on the Cytoplasmic side of the membrane. The region spanning 373–520 (KTYDAFVSYL…RFWKNLLYLM (148 aa)) is the TIR domain. Residue Glu-455 is part of the active site.

Belongs to the interleukin-1 receptor family. As to quaternary structure, forms a ternary complex with IL18 and IL18RAP. Within this complex, IL18R1 is involved in ligand-binding and IL18RAP in signaling leading to NF-kappa-B and JNK activation. Interacts with SLC12A3 in peritoneal macrophages; this interaction is increased by IL18 treatment. In terms of processing, N-glycosylated. N-linked glycosyl chains contribute to ligand recognition and intra-receptor interactions required for formation of an active ternary receptor complex. Highly expressed in leukocytes, spleen, lung. Also expressed, but at lower levels, in liver, small intestine, colon, prostate, thymus, placenta, and heart. Specifically coexpressed with IL18R1 in Th1 cells.

It localises to the membrane. The catalysed reaction is NAD(+) + H2O = ADP-D-ribose + nicotinamide + H(+). Functionally, within the IL18 receptor complex, responsible for the binding of the pro-inflammatory cytokine IL18, but not IL1A nor IL1B. Involved in IL18-mediated IFNG synthesis from T-helper 1 (Th1) cells. Contributes to IL18-induced cytokine production, either independently of SLC12A3, or as a complex with SLC12A3. The protein is Interleukin-18 receptor 1 of Homo sapiens (Human).